A 500-amino-acid chain; its full sequence is Glycerol kinase (500 aa).

Thr-16 serves as a coordination point for ADP. ATP contacts are provided by Thr-16 and Thr-17. Residue Thr-16 coordinates sn-glycerol 3-phosphate. Residue Arg-20 coordinates ADP. Residues Arg-86, Glu-87, Tyr-138, and Asp-243 each coordinate sn-glycerol 3-phosphate. Glycerol-binding residues include Arg-86, Glu-87, Tyr-138, Asp-243, and Gln-244. Residues Thr-265 and Gly-313 each coordinate ADP. ATP contacts are provided by Thr-265, Gly-313, Gln-317, and Gly-414. ADP contacts are provided by Gly-414 and Asn-418.

Belongs to the FGGY kinase family.

It carries out the reaction glycerol + ATP = sn-glycerol 3-phosphate + ADP + H(+). It functions in the pathway polyol metabolism; glycerol degradation via glycerol kinase pathway; sn-glycerol 3-phosphate from glycerol: step 1/1. Its activity is regulated as follows. Inhibited by fructose 1,6-bisphosphate (FBP). Functionally, key enzyme in the regulation of glycerol uptake and metabolism. Catalyzes the phosphorylation of glycerol to yield sn-glycerol 3-phosphate. The chain is Glycerol kinase from Nostoc sp. (strain PCC 7120 / SAG 25.82 / UTEX 2576).